The sequence spans 57 residues: Non-structural protein 3a (57 aa).

The signal sequence occupies residues 1 to 22 (MIQSPTSFLIVLILLWCKLVLS).

Its function is as follows. Involved in resistance to IFN. The sequence is that of Non-structural protein 3a from Avian infectious bronchitis virus (strain Portugal/322/82) (IBV).